A 335-amino-acid polypeptide reads, in one-letter code: Meiotic expression up-regulated protein 14 (335 aa).

The protein localises to the cytoplasm. It is found in the cytoskeleton. The protein resides in the microtubule organizing center. Its subcellular location is the spindle pole body. It localises to the nucleus membrane. The protein localises to the prospore membrane. In terms of biological role, has a role in nuclear division during meiosis II where it stabilizes the proper segregation of the spindle pole bodies. Also has a role in the formation and extension of the forespore membrane. This Schizosaccharomyces pombe (strain 972 / ATCC 24843) (Fission yeast) protein is Meiotic expression up-regulated protein 14 (meu14).